A 119-amino-acid polypeptide reads, in one-letter code: Large ribosomal subunit protein bL20 (119 aa).

Belongs to the bacterial ribosomal protein bL20 family.

Functionally, binds directly to 23S ribosomal RNA and is necessary for the in vitro assembly process of the 50S ribosomal subunit. It is not involved in the protein synthesizing functions of that subunit. The sequence is that of Large ribosomal subunit protein bL20 from Acidovorax ebreus (strain TPSY) (Diaphorobacter sp. (strain TPSY)).